The following is a 259-amino-acid chain: Global transcriptional regulator CodY (259 aa).

The segment at M1–L155 is GAF domain. Residues A203–R222 constitute a DNA-binding region (H-T-H motif).

The protein belongs to the CodY family.

The protein localises to the cytoplasm. Its function is as follows. DNA-binding global transcriptional regulator which is involved in the adaptive response to starvation and acts by directly or indirectly controlling the expression of numerous genes in response to nutrient availability. During rapid exponential growth, CodY is highly active and represses genes whose products allow adaptation to nutrient depletion. The sequence is that of Global transcriptional regulator CodY from Listeria monocytogenes serotype 4b (strain CLIP80459).